A 229-amino-acid polypeptide reads, in one-letter code: NAD-dependent protein deacetylase (229 aa).

In terms of domain architecture, Deacetylase sirtuin-type spans 1–229 (MNKLNEALKK…SDAVKVFAEI (229 aa)). Ala20, Arg32, Gln96, Ile98, Asp99, His114, Thr181, Ser182, Asn205, and Val223 together coordinate NAD(+). Residues Ile98 and Asp99 each contribute to the nicotinamide site. His114 functions as the Proton acceptor in the catalytic mechanism.

This sequence belongs to the sirtuin family. Class U subfamily.

It localises to the cytoplasm. It carries out the reaction N(6)-acetyl-L-lysyl-[protein] + NAD(+) + H2O = 2''-O-acetyl-ADP-D-ribose + nicotinamide + L-lysyl-[protein]. In terms of biological role, NAD-dependent protein deacetylase which modulates the activities of several enzymes which are inactive in their acetylated form. In Listeria monocytogenes serotype 4b (strain F2365), this protein is NAD-dependent protein deacetylase.